The sequence spans 122 residues: Small ribosomal subunit protein bS6 (122 aa).

Belongs to the bacterial ribosomal protein bS6 family.

Functionally, binds together with bS18 to 16S ribosomal RNA. This is Small ribosomal subunit protein bS6 from Neisseria gonorrhoeae (strain ATCC 700825 / FA 1090).